A 342-amino-acid chain; its full sequence is Phenylalanine--tRNA ligase alpha subunit (342 aa).

Residue Glu255 coordinates Mg(2+).

Belongs to the class-II aminoacyl-tRNA synthetase family. Phe-tRNA synthetase alpha subunit type 1 subfamily. Tetramer of two alpha and two beta subunits. Requires Mg(2+) as cofactor.

It localises to the cytoplasm. It carries out the reaction tRNA(Phe) + L-phenylalanine + ATP = L-phenylalanyl-tRNA(Phe) + AMP + diphosphate + H(+). The polypeptide is Phenylalanine--tRNA ligase alpha subunit (Pelodictyon phaeoclathratiforme (strain DSM 5477 / BU-1)).